Here is a 337-residue protein sequence, read N- to C-terminus: Structural protein VP9 (337 aa).

The protein localises to the virion. Its subcellular location is the host cytoplasm. The protein is Structural protein VP9 of Colorado tick fever virus (strain USA/Florio N-7180) (CTFV).